Here is a 430-residue protein sequence, read N- to C-terminus: Isocitrate dehydrogenase [NADP], mitochondrial (430 aa).

The transit peptide at 1–27 (MIRASAIQRTAMLLRQLRGFSTSATLA) directs the protein to the mitochondrion. NADP(+) is bound by residues 101–103 (TIT) and arginine 108. Threonine 103 is a binding site for substrate. Substrate is bound by residues 120–126 (SPNGTIR), arginine 135, and arginine 158. Aspartate 277 serves as a coordination point for Mn(2+). Position 285 (lysine 285) interacts with NADP(+). Aspartate 300 lines the Mn(2+) pocket. Residues 335–340 (GTVTRH) and asparagine 353 contribute to the NADP(+) site.

It belongs to the isocitrate and isopropylmalate dehydrogenases family. In terms of assembly, homodimer. Mg(2+) serves as cofactor. The cofactor is Mn(2+).

The protein localises to the mitochondrion. It carries out the reaction D-threo-isocitrate + NADP(+) = 2-oxoglutarate + CO2 + NADPH. Mitochondrial IDP1 may regulate flux through the tricarboxylic acid cycle and respiration. Its probably critical function is the production of NADPH. The sequence is that of Isocitrate dehydrogenase [NADP], mitochondrial (IDP1) from Candida tropicalis (Yeast).